The chain runs to 765 residues: DNA ligase (765 aa).

The disordered stretch occupies residues 1–34 (MAGDDEDRAVPAAEGAPPPSALPPVSGLDVKAAE). Residues 61 to 65 (DAEYD), 110 to 111 (SL), and Glu144 each bind NAD(+). Lys146 functions as the N6-AMP-lysine intermediate in the catalytic mechanism. NAD(+) is bound by residues Arg167, Glu204, Lys317, and Lys341. Residues Cys446, Cys449, Cys464, and Cys470 each contribute to the Zn(2+) site. One can recognise a BRCT domain in the interval 687–765 (ATDSAIAGKT…EDEWLAIAQG (79 aa)).

Belongs to the NAD-dependent DNA ligase family. LigA subfamily. It depends on Mg(2+) as a cofactor. The cofactor is Mn(2+).

The enzyme catalyses NAD(+) + (deoxyribonucleotide)n-3'-hydroxyl + 5'-phospho-(deoxyribonucleotide)m = (deoxyribonucleotide)n+m + AMP + beta-nicotinamide D-nucleotide.. In terms of biological role, DNA ligase that catalyzes the formation of phosphodiester linkages between 5'-phosphoryl and 3'-hydroxyl groups in double-stranded DNA using NAD as a coenzyme and as the energy source for the reaction. It is essential for DNA replication and repair of damaged DNA. This Paracoccus denitrificans (strain Pd 1222) protein is DNA ligase.